The following is a 772-amino-acid chain: Annulin (772 aa).

2 S-palmitoyl cysteine lipidation sites follow: cysteine 4 and cysteine 5. Residues 15–57 form a disordered region; that stretch reads NEGSGGGIPLMPVRGGSTRRPDSLPKPPAAVVPSPPSPGDVPD. Residues 38-53 are compositionally biased toward pro residues; that stretch reads LPKPPAAVVPSPPSPG. Residues histidine 400 and aspartate 427 contribute to the active site. Ca(2+) contacts are provided by asparagine 467, aspartate 469, glutamate 517, and glutamate 522.

Belongs to the transglutaminase superfamily. Transglutaminase family. It depends on Ca(2+) as a cofactor. Has an annular, or ring-like expression pattern in epithelial annuli of developing limb segment boundary cells. In embryos, it is seen in gastrulating cells, in cells surrounding rapidly dividing neuroblasts, and in muscle pioneer cells invaginating to form apodemes.

It localises to the cell membrane. It carries out the reaction L-glutaminyl-[protein] + L-lysyl-[protein] = [protein]-L-lysyl-N(6)-5-L-glutamyl-[protein] + NH4(+). Participates in morphogenetic activities of the cells, maybe by stabilizing the membrane or subcortical structures of cells that are under mechanical stress. Probably catalyzes the cross-linking of proteins and the conjugation of polyamines to proteins. The protein is Annulin of Schistocerca americana (American grasshopper).